A 363-amino-acid polypeptide reads, in one-letter code: MALLEIRNVTRRFGGYTAVDNVSIDVEAGEFFTLLGPSGCGKTTLLRMIAGFDLPDSGQILLDGKDMVGIPPEKRPVHTVFQTYALFPHMTVADNIAFPLKMAGKAPQEIKKRVNELLERVHLPNFGNRFPHELSGGQKQRVAFARGLVNRPRLLLLDEPLGALDAKLREEMQIELINLQKEIGITFIFVTHAQDEALALSHRIAVMNRGNVEQIDEPSKIYSAPRNHFVADFIGKISVMNATVMEAVPSHLKLAIEGLGEVTAPAREGMEVGDKGVLAIRPEQVRISHPSNESQLKNHFRGKVHDFLYVGDVTTYIVELANGAYIEALLPNSAPGRAKFFEVDDEVTISWRHDAGIFLNDPE.

The ABC transporter domain occupies 4-234 (LEIRNVTRRF…PRNHFVADFI (231 aa)). Residue 36–43 (GPSGCGKT) participates in ATP binding.

It belongs to the ABC transporter superfamily. Spermidine/putrescine importer (TC 3.A.1.11.1) family. In terms of assembly, the complex is composed of two ATP-binding proteins (PotA), two transmembrane proteins (PotB and PotC) and a solute-binding protein (PotD).

The protein resides in the cell inner membrane. The enzyme catalyses ATP + H2O + polyamine-[polyamine-binding protein]Side 1 = ADP + phosphate + polyamineSide 2 + [polyamine-binding protein]Side 1.. In terms of biological role, part of the ABC transporter complex PotABCD involved in spermidine/putrescine import. Responsible for energy coupling to the transport system. In Nitrosospira multiformis (strain ATCC 25196 / NCIMB 11849 / C 71), this protein is Spermidine/putrescine import ATP-binding protein PotA.